Here is a 395-residue protein sequence, read N- to C-terminus: Cytoplasmic tRNA 2-thiolation protein 1 (395 aa).

The segment covering 297-309 (TVAYKNKNKNKKK) has biased composition (basic residues). Positions 297–335 (TVAYKNKNKNKKKSNSEQEEQEKQEQEVNPDGSISLNRN) are disordered.

The protein belongs to the TtcA family. CTU1/NCS6/ATPBD3 subfamily.

The protein resides in the cytoplasm. Its pathway is tRNA modification; 5-methoxycarbonylmethyl-2-thiouridine-tRNA biosynthesis. Plays a central role in 2-thiolation of mcm(5)S(2)U at tRNA wobble positions of tRNA(Lys), tRNA(Glu) and tRNA(Gln). Directly binds tRNAs and probably acts by catalyzing adenylation of tRNAs, an intermediate required for 2-thiolation. It is unclear whether it acts as a sulfurtransferase that transfers sulfur from thiocarboxylated URM1 onto the uridine of tRNAs at wobble position. Prior mcm(5) tRNA modification by the elongator complex is required for 2-thiolation. May also be involved in protein urmylation. The polypeptide is Cytoplasmic tRNA 2-thiolation protein 1 (Candida albicans (strain SC5314 / ATCC MYA-2876) (Yeast)).